Reading from the N-terminus, the 35-residue chain is EDCLGWFSRCSPKNDKCCPNYKCSSKDLWCKYKIW.

Disulfide bonds link Cys-3-Cys-18, Cys-10-Cys-23, and Cys-17-Cys-30.

Belongs to the neurotoxin 10 (Hwtx-1) family. Expressed by the venom gland.

Its subcellular location is the secreted. Gating-modifier toxin that both inhibits the peak current of human Nav1.1/SCN1A, rat Nav1.2/SCN2A, human Nav1.6/SCN8A, and human Nav1.7/SCN9A and concurrently inhibits fast inactivation of human Nav1.1 and rat Nav1.3/SCN3A. The relative rank order potency for Nav modulation is Nav1.3 (inactivation EC(50)=45 nM) &gt; Nav1.7 &gt; Nav1.2 &gt; Nav1.1 (inactivation) &gt; Nav1.1 &gt; Nav1.6 &gt; Nav1.3 (IC(50)=8 uM). The DII and DIV S3-S4 loops of Nav channel voltage sensors are important for the interaction of this toxin with Nav channels but cannot account for its unique subtype selectivity. It is the variability of the S1-S2 loops between NaV channels which contributes substantially to the selectivity profile observed for this toxin, particularly with regards to fast inactivation. This toxin may bind the channel in the resting state. This chain is Beta/delta-theraphotoxin-Pre1a, found in Psalmopoeus reduncus (Costa Rican orangemouth tarantula).